A 142-amino-acid chain; its full sequence is Small heat shock protein IbpB (142 aa).

In terms of domain architecture, sHSP spans 26-137 (AGEGQSFPPY…AAQRIAISER (112 aa)).

It belongs to the small heat shock protein (HSP20) family. As to quaternary structure, homodimer. Forms homomultimers of about 100-150 subunits at optimal growth temperatures. Conformation changes to oligomers at high temperatures or high ionic concentrations. The decrease in size of the multimers is accompanied by an increase in chaperone activity.

It is found in the cytoplasm. Associates with aggregated proteins, together with IbpA, to stabilize and protect them from irreversible denaturation and extensive proteolysis during heat shock and oxidative stress. Aggregated proteins bound to the IbpAB complex are more efficiently refolded and reactivated by the ATP-dependent chaperone systems ClpB and DnaK/DnaJ/GrpE. Its activity is ATP-independent. This Shigella boydii serotype 18 (strain CDC 3083-94 / BS512) protein is Small heat shock protein IbpB.